The primary structure comprises 115 residues: FQLPPCQLINQTVSVEKEGCASCHPVETTICSGHCITKDPVIKIPFSKVYQHVCTYRDFYYKTFELPDCPPGVDPTVTYPVALSCHCGRCAMDTSDCTFESLQPDFCMNDIPFYY.

6 disulfide bridges follow: Cys6-Cys54, Cys20-Cys69, Cys23-Cys107, Cys31-Cys85, Cys35-Cys87, and Cys90-Cys97. An N-linked (GlcNAc...) asparagine glycan is attached at Asn10.

This sequence belongs to the glycoprotein hormones subunit beta family. In terms of assembly, heterodimer of an alpha and a beta chain.

Its subcellular location is the secreted. Involved in gametogenesis and steroidogenesis. In Thunnus obesus (Bigeye tuna), this protein is Gonadotropin subunit beta-2 (cgbb).